The following is a 449-amino-acid chain: Tripartite motif-containing protein 64B (449 aa).

The segment at 15 to 56 (CCICVNYFIDPVTIDCGHSFCRPCLCLCSEEGRAPMRCPSCR) adopts an RING-type zinc-finger fold. Residues 87 to 128 (SSDNICVLHEETKELFCEADKRLLCGPCSESPEHMAHSHSPI) form a B box-type zinc finger. Cys-92, His-95, Cys-114, and His-120 together coordinate Zn(2+). Positions 189–225 (LDEEEQRHLQALEREAEELFQQLQDSQVRMTQHLERM) form a coiled coil. In terms of domain architecture, B30.2/SPRY spans 268-449 (ELTSWCITGV…LRPFFCFGCT (182 aa)).

This sequence belongs to the TRIM/RBCC family.

The polypeptide is Tripartite motif-containing protein 64B (TRIM64B) (Homo sapiens (Human)).